Consider the following 2289-residue polypeptide: Protein Ycf2 (2289 aa).

Gly1643–Ser1650 contributes to the ATP binding site.

The protein belongs to the Ycf2 family.

The protein localises to the plastid. It is found in the chloroplast stroma. Its function is as follows. Probable ATPase of unknown function. Its presence in a non-photosynthetic plant (Epifagus virginiana) and experiments in tobacco indicate that it has an essential function which is probably not related to photosynthesis. This is Protein Ycf2 from Capsella bursa-pastoris (Shepherd's purse).